The chain runs to 355 residues: Arginine kinase (355 aa).

In terms of domain architecture, Phosphagen kinase N-terminal spans 6-90; sequence TLEKLEAGFS…FDPIIEDYHN (85 aa). Substrate is bound at residue 63–67; that stretch reads GVGIY. Positions 118-355 constitute a Phosphagen kinase C-terminal domain; that stretch reads FVVSTRVRCG…AELIKIEKSL (238 aa). Residues 121 to 125 and His184 each bind ATP; that span reads STRVR. Position 224 (Glu224) interacts with substrate. Arg228 provides a ligand contact to ATP. Cys270 contacts substrate. Residues 279–283 and 308–313 each bind ATP; these read RASVH and RGTRGE. Glu313 is a binding site for substrate.

The protein belongs to the ATP:guanido phosphotransferase family.

The catalysed reaction is L-arginine + ATP = N(omega)-phospho-L-arginine + ADP + H(+). In Plodia interpunctella (Indianmeal moth), this protein is Arginine kinase (ARGK).